A 491-amino-acid polypeptide reads, in one-letter code: Malonate-semialdehyde dehydrogenase 1 (491 aa).

7 residues coordinate NAD(+): alanine 154, phenylalanine 156, lysine 180, glutamate 183, arginine 184, serine 233, and threonine 255. The Nucleophile role is filled by cysteine 288. Glutamate 386 lines the NAD(+) pocket.

This sequence belongs to the aldehyde dehydrogenase family. IolA subfamily. Homotetramer.

It catalyses the reaction 3-oxopropanoate + NAD(+) + CoA + H2O = hydrogencarbonate + acetyl-CoA + NADH + H(+). It carries out the reaction 2-methyl-3-oxopropanoate + NAD(+) + CoA + H2O = propanoyl-CoA + hydrogencarbonate + NADH + H(+). It participates in polyol metabolism; myo-inositol degradation into acetyl-CoA; acetyl-CoA from myo-inositol: step 7/7. Its function is as follows. Catalyzes the oxidation of malonate semialdehyde (MSA) and methylmalonate semialdehyde (MMSA) into acetyl-CoA and propanoyl-CoA, respectively. Is involved in a myo-inositol catabolic pathway. Bicarbonate, and not CO2, is the end-product of the enzymatic reaction. This is Malonate-semialdehyde dehydrogenase 1 from Shouchella clausii (strain KSM-K16) (Alkalihalobacillus clausii).